Consider the following 294-residue polypeptide: Methionine aminopeptidase (294 aa).

H65 is a substrate binding site. The a divalent metal cation site is built by D85, D96, and H156. H164 lines the substrate pocket. A divalent metal cation contacts are provided by E189 and E279.

It belongs to the peptidase M24A family. Methionine aminopeptidase archaeal type 2 subfamily. In terms of assembly, monomer. Co(2+) serves as cofactor. It depends on Zn(2+) as a cofactor. The cofactor is Mn(2+). Requires Fe(2+) as cofactor.

It carries out the reaction Release of N-terminal amino acids, preferentially methionine, from peptides and arylamides.. Removes the N-terminal methionine from nascent proteins. The N-terminal methionine is often cleaved when the second residue in the primary sequence is small and uncharged (Met-Ala-, Cys, Gly, Pro, Ser, Thr, or Val). The polypeptide is Methionine aminopeptidase (Methanocaldococcus jannaschii (strain ATCC 43067 / DSM 2661 / JAL-1 / JCM 10045 / NBRC 100440) (Methanococcus jannaschii)).